Here is a 136-residue protein sequence, read N- to C-terminus: Large ribosomal subunit protein uL16 (136 aa).

It belongs to the universal ribosomal protein uL16 family. As to quaternary structure, part of the 50S ribosomal subunit.

Binds 23S rRNA and is also seen to make contacts with the A and possibly P site tRNAs. This chain is Large ribosomal subunit protein uL16, found in Serratia proteamaculans (strain 568).